A 144-amino-acid chain; its full sequence is MLVPKRVKYRRVHRGKMRGEAKGGKTVAFGDYGLQTLESHWISNRQIEAARVAMNRYMKRGGKVWIKIFPHKSYTEKGVGVRMGNGKGTPAGWVAPVKRNKIMFEVAGVPEEVAREALRLAGTKLPVKTKIVKREEVGGESDEG.

Belongs to the universal ribosomal protein uL16 family. In terms of assembly, part of the 50S ribosomal subunit.

Functionally, binds 23S rRNA and is also seen to make contacts with the A and possibly P site tRNAs. This is Large ribosomal subunit protein uL16 from Lactiplantibacillus plantarum (strain ATCC BAA-793 / NCIMB 8826 / WCFS1) (Lactobacillus plantarum).